Reading from the N-terminus, the 384-residue chain is GDSL esterase/lipase At1g28670 (384 aa).

An N-terminal signal peptide occupies residues 1 to 24 (MASSLKKLISSFLLVLYSTTIIVA). Serine 42 serves as the catalytic Nucleophile. N-linked (GlcNAc...) asparagine glycans are attached at residues asparagine 105, asparagine 138, and asparagine 321. Residues aspartate 346 and histidine 349 contribute to the active site.

Belongs to the 'GDSL' lipolytic enzyme family.

It localises to the secreted. This chain is GDSL esterase/lipase At1g28670, found in Arabidopsis thaliana (Mouse-ear cress).